We begin with the raw amino-acid sequence, 242 residues long: uncharacterized protein (242 aa).

The protein belongs to the MtxX family.

This is an uncharacterized protein from Methanothermobacter thermautotrophicus (strain ATCC 29096 / DSM 1053 / JCM 10044 / NBRC 100330 / Delta H) (Methanobacterium thermoautotrophicum).